The sequence spans 393 residues: Chorismate synthase (393 aa).

NADP(+)-binding residues include arginine 40 and arginine 46. FMN is bound by residues 129–131, 249–250, glycine 301, 316–320, and arginine 342; these read RSS, QA, and KPIPT.

It belongs to the chorismate synthase family. In terms of assembly, homotetramer. Requires FMNH2 as cofactor.

The catalysed reaction is 5-O-(1-carboxyvinyl)-3-phosphoshikimate = chorismate + phosphate. It participates in metabolic intermediate biosynthesis; chorismate biosynthesis; chorismate from D-erythrose 4-phosphate and phosphoenolpyruvate: step 7/7. Functionally, catalyzes the anti-1,4-elimination of the C-3 phosphate and the C-6 proR hydrogen from 5-enolpyruvylshikimate-3-phosphate (EPSP) to yield chorismate, which is the branch point compound that serves as the starting substrate for the three terminal pathways of aromatic amino acid biosynthesis. This reaction introduces a second double bond into the aromatic ring system. The sequence is that of Chorismate synthase from Pelobacter propionicus (strain DSM 2379 / NBRC 103807 / OttBd1).